Here is a 521-residue protein sequence, read N- to C-terminus: Runt-related transcription factor 2 (521 aa).

Disordered stretches follow at residues 18-59 (FWDP…QQQQ) and 222-340 (DGPR…RRIS). Composition is skewed to low complexity over residues 21–33 (PSTS…PSSS) and 47–59 (AAQQ…QQQQ). In terms of domain architecture, Runt spans 101 to 229 (TMVEIIADHP…TVDGPREPRR (129 aa)). Lys-238 is covalently cross-linked (Glycyl lysine isopeptide (Lys-Gly) (interchain with G-Cter in SUMO2)). Positions 242–258 (FSDRLSDLGRIPHPSMR) are required for interaction with FOXO1. Position 267 is an asymmetric dimethylarginine (Arg-267). A compositionally biased stretch (polar residues) spans 267–326 (RPSLNSAPSPFNPQGQSQITDPRQAQSSPPWSYDQSYPSYLSQMTSPSIHSTTPLSSTRG). An interaction with KAT6A region spans residues 336 to 439 (PRRISDDDTA…SQSQSGPFQT (104 aa)). Ser-340 is modified (phosphoserine). The segment at 374–468 (RQFPSISSLT…VPGGDRSPSR (95 aa)) is interaction with KAT6B. Ser-451 carries the post-translational modification Phosphoserine; by CDK1. A disordered region spans residues 460 to 521 (PGGDRSPSRM…RMDESVWRPY (62 aa)). 2 stretches are compositionally biased toward polar residues: residues 473 to 492 (CTTT…NQND) and 499 to 511 (SHSS…NSSG). Residues 512-521 (RMDESVWRPY) show a composition bias toward basic and acidic residues.

In terms of assembly, heterodimer of an alpha and a beta subunit. The alpha subunit binds DNA as a monomer and through the Runt domain. DNA-binding is increased by heterodimerization. Interacts with XRCC6 (Ku70) and XRCC5 (Ku80). Interacts with HIVEP3. Interacts with IFI204. Interaction with SATB2; the interaction results in enhanced DNA binding and transactivation by these transcription factors. Binds to HIPK3. Interacts with FOXO1 (via a C-terminal region); the interaction inhibits RUNX2 transcriptional activity towards BGLAP. This interaction is prevented on insulin or IGF1 stimulation as FOXO1 is exported from the nucleus. Interacts with CCNB1, KAT6A and KAT6B. Interacts with FOXP3. Interacts with TMEM119. Interacts with OLFM2. Interacts with IPO7; the interaction inhibits RUNX2 nuclear translocation in osteoblasts. Interacts with DDX5. Post-translationally, phosphorylated; probably by MAP kinases (MAPK). Phosphorylation by HIPK3 is required for the SPEN/MINT and FGF2 transactivation during osteoblastic differentiation. Phosphorylation at Ser-451 by CDK1 promotes endothelial cell proliferation required for tumor angiogenesis probably by facilitating cell cycle progression. Isoform 3 is phosphorylated on Ser-340. Specifically expressed in osteoblasts.

The protein localises to the nucleus. It localises to the cytoplasm. Transcription factor involved in osteoblastic differentiation and skeletal morphogenesis. Essential for the maturation of osteoblasts and both intramembranous and endochondral ossification. CBF binds to the core site, 5'-PYGPYGGT-3', of a number of enhancers and promoters, including murine leukemia virus, polyomavirus enhancer, T-cell receptor enhancers, osteocalcin, osteopontin, bone sialoprotein, alpha 1(I) collagen, LCK, IL-3 and GM-CSF promoters. In osteoblasts, supports transcription activation: synergizes with SPEN/MINT to enhance FGFR2-mediated activation of the osteocalcin FGF-responsive element (OCFRE). Inhibits KAT6B-dependent transcriptional activation. The sequence is that of Runt-related transcription factor 2 (RUNX2) from Homo sapiens (Human).